Consider the following 240-residue polypeptide: Orotidine 5'-phosphate decarboxylase (240 aa).

Residues Asp-19, Lys-41, 68-77 (DYKYYDIEET), Thr-123, Arg-184, Gln-193, Gly-213, and Arg-214 each bind substrate. Catalysis depends on Lys-70, which acts as the Proton donor.

The protein belongs to the OMP decarboxylase family. Type 1 subfamily. As to quaternary structure, homodimer.

It carries out the reaction orotidine 5'-phosphate + H(+) = UMP + CO2. It participates in pyrimidine metabolism; UMP biosynthesis via de novo pathway; UMP from orotate: step 2/2. In terms of biological role, catalyzes the decarboxylation of orotidine 5'-monophosphate (OMP) to uridine 5'-monophosphate (UMP). This chain is Orotidine 5'-phosphate decarboxylase, found in Nitrobacter winogradskyi (strain ATCC 25391 / DSM 10237 / CIP 104748 / NCIMB 11846 / Nb-255).